The sequence spans 266 residues: Protein crossbronx-like (266 aa).

A UBC core domain is found at 15 to 178 (KQGYHILAEY…VQEQAILSRN (164 aa)). The disordered stretch occupies residues 226-266 (SEYLGHIDSSRQMDEEETNQLEKLHRGRIPEPQREEAEVSL). Positions 245 to 266 (QLEKLHRGRIPEPQREEAEVSL) are enriched in basic and acidic residues.

It belongs to the ubiquitin-conjugating enzyme family. FTS subfamily.

The polypeptide is Protein crossbronx-like (Drosophila sechellia (Fruit fly)).